A 245-amino-acid chain; its full sequence is tRNA (guanine-N(1)-)-methyltransferase (245 aa).

S-adenosyl-L-methionine is bound by residues G111 and 131–136 (MGDYVL).

Belongs to the RNA methyltransferase TrmD family. As to quaternary structure, homodimer.

It localises to the cytoplasm. The enzyme catalyses guanosine(37) in tRNA + S-adenosyl-L-methionine = N(1)-methylguanosine(37) in tRNA + S-adenosyl-L-homocysteine + H(+). Its function is as follows. Specifically methylates guanosine-37 in various tRNAs. The protein is tRNA (guanine-N(1)-)-methyltransferase of Staphylococcus aureus (strain Mu3 / ATCC 700698).